The following is a 276-amino-acid chain: 2-dehydro-3-deoxyphosphooctonate aldolase (276 aa).

Belongs to the KdsA family.

The protein resides in the cytoplasm. It catalyses the reaction D-arabinose 5-phosphate + phosphoenolpyruvate + H2O = 3-deoxy-alpha-D-manno-2-octulosonate-8-phosphate + phosphate. Its pathway is carbohydrate biosynthesis; 3-deoxy-D-manno-octulosonate biosynthesis; 3-deoxy-D-manno-octulosonate from D-ribulose 5-phosphate: step 2/3. It functions in the pathway bacterial outer membrane biogenesis; lipopolysaccharide biosynthesis. This Helicobacter pylori (strain P12) protein is 2-dehydro-3-deoxyphosphooctonate aldolase.